Reading from the N-terminus, the 554-residue chain is Glucose-6-phosphate isomerase (554 aa).

The Proton donor role is filled by E359. Active-site residues include H390 and K518.

It belongs to the GPI family.

It is found in the cytoplasm. It catalyses the reaction alpha-D-glucose 6-phosphate = beta-D-fructose 6-phosphate. The protein operates within carbohydrate biosynthesis; gluconeogenesis. It functions in the pathway carbohydrate degradation; glycolysis; D-glyceraldehyde 3-phosphate and glycerone phosphate from D-glucose: step 2/4. Functionally, catalyzes the reversible isomerization of glucose-6-phosphate to fructose-6-phosphate. This chain is Glucose-6-phosphate isomerase, found in Pseudomonas aeruginosa (strain LESB58).